The primary structure comprises 225 residues: 2-C-methyl-D-erythritol 4-phosphate cytidylyltransferase (225 aa).

It belongs to the IspD/TarI cytidylyltransferase family. IspD subfamily.

The catalysed reaction is 2-C-methyl-D-erythritol 4-phosphate + CTP + H(+) = 4-CDP-2-C-methyl-D-erythritol + diphosphate. Its pathway is isoprenoid biosynthesis; isopentenyl diphosphate biosynthesis via DXP pathway; isopentenyl diphosphate from 1-deoxy-D-xylulose 5-phosphate: step 2/6. Catalyzes the formation of 4-diphosphocytidyl-2-C-methyl-D-erythritol from CTP and 2-C-methyl-D-erythritol 4-phosphate (MEP). The sequence is that of 2-C-methyl-D-erythritol 4-phosphate cytidylyltransferase from Chromobacterium violaceum (strain ATCC 12472 / DSM 30191 / JCM 1249 / CCUG 213 / NBRC 12614 / NCIMB 9131 / NCTC 9757 / MK).